A 256-amino-acid chain; its full sequence is Imidazole glycerol phosphate synthase subunit HisF (256 aa).

Catalysis depends on residues D12 and D131.

This sequence belongs to the HisA/HisF family. Heterodimer of HisH and HisF.

Its subcellular location is the cytoplasm. It catalyses the reaction 5-[(5-phospho-1-deoxy-D-ribulos-1-ylimino)methylamino]-1-(5-phospho-beta-D-ribosyl)imidazole-4-carboxamide + L-glutamine = D-erythro-1-(imidazol-4-yl)glycerol 3-phosphate + 5-amino-1-(5-phospho-beta-D-ribosyl)imidazole-4-carboxamide + L-glutamate + H(+). Its pathway is amino-acid biosynthesis; L-histidine biosynthesis; L-histidine from 5-phospho-alpha-D-ribose 1-diphosphate: step 5/9. IGPS catalyzes the conversion of PRFAR and glutamine to IGP, AICAR and glutamate. The HisF subunit catalyzes the cyclization activity that produces IGP and AICAR from PRFAR using the ammonia provided by the HisH subunit. This Pseudomonas fluorescens (strain ATCC BAA-477 / NRRL B-23932 / Pf-5) protein is Imidazole glycerol phosphate synthase subunit HisF.